Here is a 646-residue protein sequence, read N- to C-terminus: Secretogranin-1 (646 aa).

A signal peptide spans 1–20 (MQPAALLGLLGATVVAAVSS). C36 and C57 form a disulfide bridge. Basic and acidic residues predominate over residues 67-90 (ELKNEEKSENENTRFEVRLLRDPA). Residues 67–483 (ELKNEEKSEN…GKQYAPHHIT (417 aa)) form a disordered region. S74 carries the post-translational modification Phosphoserine. Residues T79 and T92 each carry the phosphothreonine modification. 4 positions are modified to phosphoserine: S93, S99, S100, and S104. A glycan (O-linked (Xyl...) (chondroitin sulfate) serine) is linked at S93. Residue T113 is glycosylated (O-linked (GalNAc...) threonine). Basic and acidic residues-rich tracts occupy residues 119-128 (SGGHSRERAG) and 137-173 (KEAK…ERLS). 3 positions are modified to phosphoserine: S123, S146, and S168. Residues 182 to 191 (AFLNQRNQTP) are compositionally biased toward polar residues. T190 is a glycosylation site (O-linked (GalNAc...) threonine). S205 is modified (phosphoserine). Residues 208–228 (GLEKSHSRERSSQESGEETKS) show a composition bias toward basic and acidic residues. A glycan (O-linked (Xyl...) (chondroitin sulfate) serine) is linked at S222. Basic residues predominate over residues 260 to 270 (RHSRPRHHHGR). 3 positions are modified to phosphoserine: S276, S277, and S295. Y315 is subject to Sulfotyrosine. Residues 340-361 (GRGEHQALRRPSEESLEQENKR) are compositionally biased toward basic and acidic residues. S351 and S354 each carry phosphoserine. Y374 bears the Phosphotyrosine mark. Phosphoserine occurs at positions 375 and 378. Over residues 406–425 (TDEKRFLGETHHRVQESQRD) the composition is skewed to basic and acidic residues. Y441 is subject to Sulfotyrosine. Basic and acidic residues-rich tracts occupy residues 442-451 (GEEKGEEAAR) and 459-472 (DPRD…EARL). Q476 carries the post-translational modification Pyrrolidone carboxylic acid; in secretogranin-1(476-566). Phosphoserine is present on residues S502, S503, and S514. Y535 bears the Sulfotyrosine mark. At Q567 the chain carries Pyrrolidone carboxylic acid; in peptide BAM-1745. Residue S584 is modified to Phosphoserine. Residues 588 to 620 (PDFYDSEEQMSPQHTAENEEEKAGQGVLTEEEE) are disordered. A Sulfotyrosine modification is found at Y591. 2 positions are modified to phosphoserine: S593 and S598. Residue Q634 is modified to Pyrrolidone carboxylic acid; in Secretolytin; partial.

This sequence belongs to the chromogranin/secretogranin protein family. As to quaternary structure, interacts with ITPR1 in the secretory granules. O-glycosylated by the trisaccharide, GalNAc-Gal-NeuAc, on 2 sites in the N-terminal. May be glycated. Post-translationally, extensively phosphorylated. In terms of processing, differentially processed on numerous sites throughout the sequence depending on tissue type.

The protein resides in the cytoplasmic vesicle. It is found in the secretory vesicle membrane. The protein localises to the secreted. Its function is as follows. Secretogranin-1 is a neuroendocrine secretory granule protein, which may be the precursor for other biologically active peptides. The 16 pairs of basic AA distributed throughout its sequence may be used as proteolytic cleavage sites. Functionally, secretolytin has antibacterial activity. The sequence is that of Secretogranin-1 (CHGB) from Bos taurus (Bovine).